Here is a 398-residue protein sequence, read N- to C-terminus: Small ribosomal subunit protein mS78 (rPPR3a) (398 aa).

The transit peptide at 1–19 (MSSLSRVLRGTFNTCPIRR) directs the protein to the mitochondrion. PPR repeat units lie at residues 108 to 142 (KEGF…DCKR), 143 to 173 (SVLS…LPGK), 179 to 213 (DIVS…GLKP), 214 to 248 (DIVT…NVAI), 249 to 283 (DIRT…GLKP), 284 to 318 (DVFS…GYRP), and 319 to 353 (DKAT…RYLV).

Belongs to the PPR family. P subfamily. As to quaternary structure, component of the mitochondrial ribosome small subunit.

The protein resides in the mitochondrion. The chain is Small ribosomal subunit protein mS78 (rPPR3a) from Arabidopsis thaliana (Mouse-ear cress).